A 424-amino-acid chain; its full sequence is Dihydroorotase (424 aa).

Residues histidine 61 and histidine 63 each contribute to the Zn(2+) site. Substrate contacts are provided by residues histidine 63–arginine 65 and asparagine 95. Positions 153, 180, and 233 each coordinate Zn(2+). A substrate-binding site is contributed by asparagine 279. A Zn(2+)-binding site is contributed by aspartate 306. Aspartate 306 is an active-site residue. Histidine 310 lines the substrate pocket.

It belongs to the metallo-dependent hydrolases superfamily. DHOase family. Class I DHOase subfamily. Zn(2+) serves as cofactor.

The enzyme catalyses (S)-dihydroorotate + H2O = N-carbamoyl-L-aspartate + H(+). It functions in the pathway pyrimidine metabolism; UMP biosynthesis via de novo pathway; (S)-dihydroorotate from bicarbonate: step 3/3. Functionally, catalyzes the reversible cyclization of carbamoyl aspartate to dihydroorotate. In Geobacter metallireducens (strain ATCC 53774 / DSM 7210 / GS-15), this protein is Dihydroorotase.